The primary structure comprises 182 residues: Epoxyqueuosine reductase QueH (182 aa).

[4Fe-4S] cluster is bound by residues cysteine 10, cysteine 11, cysteine 85, and cysteine 88. Cysteines 165 and 167 form a disulfide.

This sequence belongs to the QueH family.

It catalyses the reaction epoxyqueuosine(34) in tRNA + AH2 = queuosine(34) in tRNA + A + H2O. Its pathway is tRNA modification; tRNA-queuosine biosynthesis. Its function is as follows. Catalyzes the conversion of epoxyqueuosine (oQ) to queuosine (Q), which is a hypermodified base found in the wobble positions of tRNA(Asp), tRNA(Asn), tRNA(His) and tRNA(Tyr). The protein is Epoxyqueuosine reductase QueH of Dehalococcoides mccartyi (strain ATCC BAA-2266 / KCTC 15142 / 195) (Dehalococcoides ethenogenes (strain 195)).